Consider the following 648-residue polypeptide: RAF proto-oncogene serine/threonine-protein kinase (648 aa).

Ser29 carries the phosphoserine; by MAPK1 modification. Ser43 carries the phosphoserine; by PKA and MAPK1 modification. In terms of domain architecture, RBD spans 56–131 (NTIRVFLPNK…IGEELQVDFL (76 aa)). The Phorbol-ester/DAG-type zinc finger occupies 138–184 (THNFARKTFLKLAFCDICQKFLLNGFRCQTCGYKFHEHCSTKVPTMC). Positions 139, 152, 155, 165, 168, 173, 176, and 184 each coordinate Zn(2+). The disordered stretch occupies residues 220–334 (SVSRMPVSSQ…QEKNKIRPRG (115 aa)). The span at 239–271 (TFNTSSPSSEGSLSQRQRSTSTPNVHMVSTTLP) shows a compositional bias: polar residues. Ser252 carries the post-translational modification Phosphoserine. A Phosphoserine; by PKA, PKC and PKB/AKT1 modification is found at Ser259. At Thr268 the chain carries Phosphothreonine; by autocatalysis. Thr269 is subject to Phosphothreonine; by PKA. The span at 275-285 (RMIEDAIRSHS) shows a compositional bias: basic and acidic residues. Residues 286 to 301 (ESASPSALSSSPNNLS) are compositionally biased toward low complexity. The residue at position 289 (Ser289) is a Phosphoserine; by MAPK1. At Ser296 the chain carries Phosphoserine. Phosphoserine; by MAPK1 is present on Ser301. Positions 331-349 (RPRGQRDSSYYWEIEASEV) are interaction with PEBP1/RKIP. Ser338 is modified (phosphoserine; by PAK1, PAK2, PAK3 and PAK5). Ser339 is modified (phosphoserine; by PAK1, PAK2 and PAK3). Phosphotyrosine; by SRC is present on residues Tyr340 and Tyr341. The Protein kinase domain maps to 349–609 (VMLSTRIGSG…PQILSSIELL (261 aa)). ATP contacts are provided by residues 355–363 (IGSGSFGTV) and Lys375. Catalysis depends on Asp468, which acts as the Proton acceptor. A Phosphoserine modification is found at Ser471. Thr491 carries the post-translational modification Phosphothreonine. Position 494 is a phosphoserine (Ser494). Position 499 is a phosphoserine; by PKC (Ser499). Arg563 is subject to Symmetric dimethylarginine; by PRMT5. Ser621 bears the Phosphoserine mark. Ser642 carries the phosphoserine; by MAPK1 modification.

This sequence belongs to the protein kinase superfamily. TKL Ser/Thr protein kinase family. RAF subfamily. In terms of assembly, monomer. Homodimer. Heterodimerizes with BRAF and this heterodimer possesses a highly increased kinase activity compared to the respective homodimers or monomers. Heterodimerization is mitogen-regulated and enhanced by 14-3-3 proteins. MAPK1/ERK2 activation can induce a negative feedback that promotes the dissociation of the heterodimer. Forms a multiprotein complex with Ras (M-Ras/MRAS), SHOC2 and protein phosphatase 1 (PPP1CA, PPP1CB and PPP1CC). Interacts with LZTR1. Interacts with Ras proteins; the interaction is antagonized by RIN1. Weakly interacts with RIT1. Interacts (via N-terminus) with RGS14 (via RBD domains); the interaction mediates the formation of a ternary complex with BRAF, a ternary complex inhibited by GNAI1. Probably forms a complex composed of chaperones HSP90 and HSP70, co-chaperones CDC37, PPP5C, TSC1 and client protein TSC2, CDK4, AKT, RAF1 and NR3C1; this complex does not contain co-chaperones STIP1/HOP and PTGES3/p23. Interacts with STK3/MST2; the interaction inhibits its pro-apoptotic activity. Interacts (when phosphorylated at Ser-259) with YWHAZ (unphosphorylated at 'Thr-232'). Interacts with MAP2K1/MEK1 and MAP2K2/MEK2. Interacts with MAP3K5/ASF1 (via N-terminus) and this interaction inhibits the proapoptotic function of MAP3K5/ASK1. Interacts with PAK1 (via kinase domain). The phosphorylated form interacts with PIN1. The Ser-338 and Ser-339 phosphorylated form (by PAK1) interacts with BCL2. Interacts with PEBP1/RKIP and this interaction is enhanced if RAF1 is phosphorylated on residues Ser-338, Ser-339, Tyr-340 and Tyr-341. Interacts with ADCY2, ADCY5, ADCY6, DGKH, RCAN1/DSCR1, PPP1R12A, PKB/AKT1, PPP2CA, PPP2R1B, SPRY2, SPRY4, CNKSR1/CNK1, KSR2 and PHB/prohibitin. Interacts with ROCK2. In its active form, interacts with PRMT5. Interacts with FAM83B; displaces 14-3-3 proteins from RAF1 and activates RAF1. Interacts with PDE8A; the interaction promotes RAF1 activity. Interacts with MFHAS1. Interacts with GLS. Interacts with NEK10 and MAP2K1; the interaction is direct with NEK10 and required for ERK1/2-signaling pathway activation in response to UV irradiation. Zn(2+) is required as a cofactor. Post-translationally, phosphorylation at Thr-269, Ser-338, Tyr-341, Thr-491 and Ser-494 results in its activation. Phosphorylation at Ser-29, Ser-43, Ser-289, Ser-296, Ser-301 and Ser-642 by MAPK1/ERK2 results in its inactivation. Phosphorylation at Ser-259 induces the interaction with YWHAZ and inactivates kinase activity. Dephosphorylation of Ser-259 by the SHOC2-MRAS-PP1c (SMP) complex consisting of SHOC2, GTP-bound M-Ras/MRAS and the catalytic subunit of protein phosphatase 1 (PPP1CA, PPP1CB or PPP1CC); this relieves inactivation and stimulates kinase activity. Phosphorylation at Ser-338 by PAK1 and PAK5 and Ser-339 by PAK1 is required for its mitochondrial localization. Phosphorylation at Ser-621 in response to growth factor treatment stabilizes the protein, possibly by preventing proteasomal degradation. Phosphorylation at Ser-289, Ser-296, Ser-301, Ser-338 and Ser-621 are somehow linked to the methylation potential of cells. Treatment of cells with HGF in the presence of the methylation inhibitor 5'-methylthioadenosine (MTA) results in increased phosphorylation at Ser-338 and Ser-621 and decreased phosphorylation at Ser-296, Ser-301 and Ser-338. Dephosphorylation at Ser-338 by PPP5C results in an activity decrease. Methylated at Arg-563 in response to EGF treatment. This modification leads to destabilization of the protein, possibly through proteasomal degradation. As to expression, in skeletal muscle, isoform 1 is more abundant than isoform 2.

It localises to the cytoplasm. The protein localises to the cell membrane. The protein resides in the mitochondrion. It is found in the nucleus. The enzyme catalyses L-seryl-[protein] + ATP = O-phospho-L-seryl-[protein] + ADP + H(+). It carries out the reaction L-threonyl-[protein] + ATP = O-phospho-L-threonyl-[protein] + ADP + H(+). Its activity is regulated as follows. Regulation is a highly complex process involving membrane recruitment, protein-protein interactions, dimerization, and phosphorylation/dephosphorylation events. Ras-GTP recruits RAF1 to the membrane, thereby promoting its activation. The inactive conformation of RAF1 is maintained by autoinhibitory interactions occurring between the N-terminal regulatory and the C-terminal catalytic domains and by the binding of a 14-3-3 protein that contacts two phosphorylation sites, Ser-259 and Ser-621. Upon mitogenic stimulation, Ras and PPP2R1A cooperate to release autoinhibition and the subsequent phosphorylation of activating sites: Ser-338, Tyr-341, Thr-491, and Ser-494, yields a fully active kinase. Through a negative feedback mechanism involving MAPK1/ERK2, RAF1 is phosphorylated on Ser-29, Ser-43, Ser-289, Ser-296, Ser-301 and Ser-642 by MAPK1/ERK2, which yields an inactive, desensitized kinase. The signaling-competent conformation of RAF1 is finally re-established by the coordinated action of PIN1, a prolyl isomerase that converts pSer and pThr residues from the cis to the trans conformation, which is preferentially recognized and dephosphorylated by PPP2R1A. Activated by homodimerization and heterodimerization (with BRAF). Also regulated through association with other proteins such as KSR2, CNKSR1/CNK1, PEBP1/RKIP, PHB/prohibitin and SPRY4. PEBP1/RKIP acts by dissociating RAF1 from its substrates MAP2K1/MEK1 and MAP2K2/MEK2. PHB/prohibitin facilitates the displacement of 14-3-3 from RAF1 by activated Ras, thereby promoting cell membrane localization and phosphorylation of RAF1 at the activating Ser-338. SPRY4 inhibits Ras-independent, but not Ras-dependent, activation of RAF1. CNKSR1/CNK1 regulates Src-mediated RAF1 activation. Serine/threonine-protein kinase that acts as a regulatory link between the membrane-associated Ras GTPases and the MAPK/ERK cascade, and this critical regulatory link functions as a switch determining cell fate decisions including proliferation, differentiation, apoptosis, survival and oncogenic transformation. RAF1 activation initiates a mitogen-activated protein kinase (MAPK) cascade that comprises a sequential phosphorylation of the dual-specific MAPK kinases (MAP2K1/MEK1 and MAP2K2/MEK2) and the extracellular signal-regulated kinases (MAPK3/ERK1 and MAPK1/ERK2). The phosphorylated form of RAF1 (on residues Ser-338 and Ser-339, by PAK1) phosphorylates BAD/Bcl2-antagonist of cell death at 'Ser-75'. Phosphorylates adenylyl cyclases: ADCY2, ADCY5 and ADCY6, resulting in their activation. Phosphorylates PPP1R12A resulting in inhibition of the phosphatase activity. Phosphorylates TNNT2/cardiac muscle troponin T. Can promote NF-kB activation and inhibit signal transducers involved in motility (ROCK2), apoptosis (MAP3K5/ASK1 and STK3/MST2), proliferation and angiogenesis (RB1). Can protect cells from apoptosis also by translocating to the mitochondria where it binds BCL2 and displaces BAD/Bcl2-antagonist of cell death. Regulates Rho signaling and migration, and is required for normal wound healing. Plays a role in the oncogenic transformation of epithelial cells via repression of the TJ protein, occludin (OCLN) by inducing the up-regulation of a transcriptional repressor SNAI2/SLUG, which induces down-regulation of OCLN. Restricts caspase activation in response to selected stimuli, notably Fas stimulation, pathogen-mediated macrophage apoptosis, and erythroid differentiation. The chain is RAF proto-oncogene serine/threonine-protein kinase from Homo sapiens (Human).